A 461-amino-acid polypeptide reads, in one-letter code: Photosystem II CP43 reaction center protein (461 aa).

Positions 1–2 are excised as a propeptide; the sequence is ME. N-acetylthreonine is present on Thr3. Thr3 is modified (phosphothreonine). Helical transmembrane passes span 57–81, 122–143, 166–188, 243–263, and 279–300; these read LFEVAHFVPEKPMYEQGLILLPHLA, LIGPETLEESFPFFGYVWKDKS, KSVYFGGVYDTWAPGGGDVRKIT, KPFAWARRAFVWSGEAYLSYS, and WFNNTAYPSEFYGPTGPEASQA. Residue Glu355 participates in [CaMn4O5] cluster binding. The chain crosses the membrane as a helical span at residues 435–459; sequence RARAAAAGFEKGIDRDTEPVLSMTP.

The protein belongs to the PsbB/PsbC family. PsbC subfamily. In terms of assembly, PSII is composed of 1 copy each of membrane proteins PsbA, PsbB, PsbC, PsbD, PsbE, PsbF, PsbH, PsbI, PsbJ, PsbK, PsbL, PsbM, PsbT, PsbX, PsbY, PsbZ, Psb30/Ycf12, at least 3 peripheral proteins of the oxygen-evolving complex and a large number of cofactors. It forms dimeric complexes. It depends on Binds multiple chlorophylls and provides some of the ligands for the Ca-4Mn-5O cluster of the oxygen-evolving complex. It may also provide a ligand for a Cl- that is required for oxygen evolution. PSII binds additional chlorophylls, carotenoids and specific lipids. as a cofactor.

It is found in the plastid. The protein resides in the chloroplast thylakoid membrane. Functionally, one of the components of the core complex of photosystem II (PSII). It binds chlorophyll and helps catalyze the primary light-induced photochemical processes of PSII. PSII is a light-driven water:plastoquinone oxidoreductase, using light energy to abstract electrons from H(2)O, generating O(2) and a proton gradient subsequently used for ATP formation. This is Photosystem II CP43 reaction center protein from Psilotum nudum (Whisk fern).